We begin with the raw amino-acid sequence, 201 residues long: Imidazoleglycerol-phosphate dehydratase (201 aa).

Belongs to the imidazoleglycerol-phosphate dehydratase family.

It is found in the cytoplasm. It carries out the reaction D-erythro-1-(imidazol-4-yl)glycerol 3-phosphate = 3-(imidazol-4-yl)-2-oxopropyl phosphate + H2O. It participates in amino-acid biosynthesis; L-histidine biosynthesis; L-histidine from 5-phospho-alpha-D-ribose 1-diphosphate: step 6/9. The chain is Imidazoleglycerol-phosphate dehydratase from Methanopyrus kandleri (strain AV19 / DSM 6324 / JCM 9639 / NBRC 100938).